The following is a 262-amino-acid chain: Nurim (262 aa).

The Nuclear portion of the chain corresponds to 1–4 (MAPA). The chain crosses the membrane as a helical span at residues 5-28 (LLLVPAALASFILAFGTGVEFVRF). The Perinuclear space portion of the chain corresponds to 29–58 (TSLRPLLGGIPESGGPDARQGWLAALQDRS). A helical transmembrane segment spans residues 59-80 (ILAPLAWDLGLLLLFVGQHSLM). The Nuclear segment spans residues 81-97 (AAERVKAWTSRYFGVLQ). The chain crosses the membrane as a helical span at residues 98-114 (RSLYVACTALALQLVMR). The Perinuclear space portion of the chain corresponds to 115–133 (YWEPIPKGPVLWEARAEPW). A helical membrane pass occupies residues 134-164 (ATWVPLLCFVLHVISWLLIFSILLVFDYAEL). The Nuclear segment spans residues 165-191 (MGLKQVYYHVLGLGEPLALKSPRALRL). The helical transmembrane segment at 192-210 (FSHLRHPVCVELLTVLWVV) threads the bilayer. Topologically, residues 211-216 (PTLGTD) are perinuclear space. A helical membrane pass occupies residues 217 to 234 (RLLLAFLLTLYLGLAHGL). Topologically, residues 235–262 (DQQDLRYLRAQLQRKLHLLSRPQDGEAE) are nuclear.

The protein belongs to the nurim family.

It is found in the nucleus inner membrane. This chain is Nurim (NRM), found in Pan troglodytes (Chimpanzee).